The sequence spans 20 residues: Non-specific lipid-transfer protein (20 aa).

It belongs to the plant LTP family.

In terms of biological role, plant non-specific lipid-transfer proteins transfer phospholipids as well as galactolipids across membranes. May play a role in wax or cutin deposition in the cell walls of expanding epidermal cells and certain secretory tissues. This is Non-specific lipid-transfer protein from Citrus limon (Lemon).